We begin with the raw amino-acid sequence, 653 residues long: J protein JJJ2 (653 aa).

The J domain occupies 14-78 (TLYSVLNLKY…KEKMKYDSKL (65 aa)). 2 disordered regions span residues 85 to 308 (DYSP…SSTE) and 490 to 512 (VSPK…EENL). Composition is skewed to polar residues over residues 161-171 (NAKSYQNSKKS) and 187-200 (ATSF…SSSV). Residues 213–241 (SGSAVGSESRISSSGSESSSNVNSATGSS) are compositionally biased toward low complexity. Polar residues predominate over residues 298 to 308 (PVKTTPNSSTE).

The protein resides in the cytoplasm. Its subcellular location is the nucleus. The polypeptide is J protein JJJ2 (JJJ2) (Kluyveromyces lactis (strain ATCC 8585 / CBS 2359 / DSM 70799 / NBRC 1267 / NRRL Y-1140 / WM37) (Yeast)).